Reading from the N-terminus, the 435-residue chain is Citrate synthase (435 aa).

Active-site residues include histidine 311 and aspartate 370.

This sequence belongs to the citrate synthase family.

It carries out the reaction oxaloacetate + acetyl-CoA + H2O = citrate + CoA + H(+). It participates in carbohydrate metabolism; tricarboxylic acid cycle; isocitrate from oxaloacetate: step 1/2. This is Citrate synthase (gltA) from Rickettsia slovaca (strain 13-B).